Here is a 103-residue protein sequence, read N- to C-terminus: Carboxysome shell protein CcmK3 (103 aa).

The region spanning 4–91 is the BMC domain; it reads AVGVIQTLGF…PPENVLAVLP (88 aa).

Belongs to the bacterial microcompartments protein family. CcmK subfamily. Forms mixed heterohexamers with CcmK4, probably with 1:5 CcmK3:CcmK4 stoichiometry. Only very weak interactions with CcmK1 and CcmK2 were seen. Bulky residues in the pore region probably preclude the formation of homohexamers by this subunit.

It is found in the carboxysome. A probably minor shell protein component of the carboxysome, a polyhedral inclusion where RuBisCO (ribulose bisphosphate carboxylase, rbcL-rbcS) is sequestered. This subunit probably does not form homohexamers. The chain is Carboxysome shell protein CcmK3 from Synechocystis sp. (strain ATCC 27184 / PCC 6803 / Kazusa).